Reading from the N-terminus, the 211-residue chain is Uracil phosphoribosyltransferase (211 aa).

5-phospho-alpha-D-ribose 1-diphosphate contacts are provided by residues Arg79, Arg104, and Asp131–Ser139. Uracil-binding positions include Ile196 and Gly201–Ala203. A 5-phospho-alpha-D-ribose 1-diphosphate-binding site is contributed by Asp202.

Belongs to the UPRTase family. Requires Mg(2+) as cofactor.

The catalysed reaction is UMP + diphosphate = 5-phospho-alpha-D-ribose 1-diphosphate + uracil. The protein operates within pyrimidine metabolism; UMP biosynthesis via salvage pathway; UMP from uracil: step 1/1. Allosterically activated by GTP. Its function is as follows. Catalyzes the conversion of uracil and 5-phospho-alpha-D-ribose 1-diphosphate (PRPP) to UMP and diphosphate. This Limosilactobacillus reuteri (strain DSM 20016) (Lactobacillus reuteri) protein is Uracil phosphoribosyltransferase.